A 249-amino-acid polypeptide reads, in one-letter code: Transcription initiation factor TFIID subunit 9B (249 aa).

Met-1 is modified (N-acetylmethionine). At Ser-147 the chain carries Phosphoserine. Positions 148-171 (AVSSRPTTPPVAPPQAVSGPNKAA) are disordered. Position 172 is a phosphothreonine (Thr-172). Ser-175 carries the phosphoserine modification. A compositionally biased stretch (polar residues) spans 224-234 (VSSQNTATDSN). The disordered stretch occupies residues 224–249 (VSSQNTATDSNPLKRKHDDDDDNDTM).

This sequence belongs to the TAF9 family. Binds TAF5 and TAF6. Component of TFIID and the TATA-binding protein-free TAF complex (TFTC). TFIID is composed of TATA binding protein (TBP) and a number of TBP-associated factors (TAFs). Binds N-terminal domain of p53/TP53 which is essential for transcription.

Its subcellular location is the nucleus. Functionally, essential for cell viability. TAF9 and TAF9B are involved in transcriptional activation as well as repression of distinct but overlapping sets of genes. May have a role in gene regulation associated with apoptosis. TAFs are components of the transcription factor IID (TFIID) complex, the TBP-free TAFII complex (TFTC), the PCAF histone acetylase complex and the STAGA transcription coactivator-HAT complex. TFIID or TFTC are essential for the regulation of RNA polymerase II-mediated transcription. In Mus musculus (Mouse), this protein is Transcription initiation factor TFIID subunit 9B (Taf9b).